A 443-amino-acid polypeptide reads, in one-letter code: Transcriptional adapter 2-alpha (443 aa).

Ser-6 carries the post-translational modification Phosphoserine. The ZZ-type zinc-finger motif lies at 12–69 (SDKPPCRGCSSYLTEPYIKCAECGPPPFFLCLQCFTRGFEYKKHQSDHTYEIMTSDFP). Zn(2+) contacts are provided by Cys-17, Cys-20, Cys-31, Cys-34, Cys-42, Cys-45, His-55, and His-59. Residues 70–122 (VLDPSWTAQEEMALLEAVMDCGFGNWQDVANQMCTKTKEECEKHYMKHFINNP) form the SANT domain. Residues Lys-132 and Lys-138 each participate in a glycyl lysine isopeptide (Lys-Gly) (interchain with G-Cter in SUMO2) cross-link. Positions 356 to 443 (NSGRRSAPPL…LIREGYITKA (88 aa)) constitute an SWIRM domain. Residues 426–435 (KTRKIYDFLI) mediate DNA binding.

As to quaternary structure, interacts with GCN5. Interacts with NR3C1. Associated with the P/CAF protein in the PCAF complex. Component of the PCAF complex, at least composed of TADA2L/ADA2, TADA3L/ADA3, TAF5L/PAF65-beta, TAF6L/PAF65-alpha, TAF10/TAFII30, TAF12/TAFII20, TAF9/TAFII31 and TRRAP. Component of the ADA2A-containing complex (ATAC), composed of KAT14, KAT2A, TADA2L, TADA3L, ZZ3, MBIP, WDR5, YEATS2, CCDC101 and DR1. Interacts with CCDC134.

Its subcellular location is the nucleus. It localises to the chromosome. In terms of biological role, component of the ATAC complex, a complex with histone acetyltransferase activity on histones H3 and H4. Required for the function of some acidic activation domains, which activate transcription from a distant site. Binds double-stranded DNA. Binds dinucleosomes, probably at the linker region between neighboring nucleosomes. Plays a role in chromatin remodeling. May promote TP53/p53 'Lys-321' acetylation, leading to reduced TP53 stability and transcriptional activity. May also promote XRCC6 acetylation thus facilitating cell apoptosis in response to DNA damage. This chain is Transcriptional adapter 2-alpha (Tada2a), found in Mus musculus (Mouse).